Consider the following 237-residue polypeptide: tRNA (guanine-N(1)-)-methyltransferase (237 aa).

Residues Gly-112 and 132–137 (IGDFVL) contribute to the S-adenosyl-L-methionine site.

Belongs to the RNA methyltransferase TrmD family. In terms of assembly, homodimer.

Its subcellular location is the cytoplasm. The enzyme catalyses guanosine(37) in tRNA + S-adenosyl-L-methionine = N(1)-methylguanosine(37) in tRNA + S-adenosyl-L-homocysteine + H(+). Specifically methylates guanosine-37 in various tRNAs. This chain is tRNA (guanine-N(1)-)-methyltransferase, found in Thermosynechococcus vestitus (strain NIES-2133 / IAM M-273 / BP-1).